Consider the following 135-residue polypeptide: Large ribosomal subunit protein eL27x (135 aa).

This sequence belongs to the eukaryotic ribosomal protein eL27 family.

This chain is Large ribosomal subunit protein eL27x (RPL27C), found in Arabidopsis thaliana (Mouse-ear cress).